Reading from the N-terminus, the 450-residue chain is Enolase (450 aa).

Gln-173 serves as a coordination point for (2R)-2-phosphoglycerate. Residue Glu-215 is the Proton donor of the active site. The Mg(2+) site is built by Asp-254, Glu-308, and Asp-335. (2R)-2-phosphoglycerate-binding residues include Lys-360, Arg-389, Ser-390, and Lys-411. Catalysis depends on Lys-360, which acts as the Proton acceptor.

Belongs to the enolase family. Mg(2+) serves as cofactor.

The protein localises to the cytoplasm. It is found in the secreted. It localises to the cell surface. It carries out the reaction (2R)-2-phosphoglycerate = phosphoenolpyruvate + H2O. The protein operates within carbohydrate degradation; glycolysis; pyruvate from D-glyceraldehyde 3-phosphate: step 4/5. In terms of biological role, catalyzes the reversible conversion of 2-phosphoglycerate (2-PG) into phosphoenolpyruvate (PEP). It is essential for the degradation of carbohydrates via glycolysis. The protein is Enolase of Malacoplasma penetrans (strain HF-2) (Mycoplasma penetrans).